The chain runs to 263 residues: Trans-2-decenoyl-[acyl-carrier-protein] isomerase (263 aa).

Belongs to the enoyl-CoA hydratase/isomerase family. In terms of assembly, homotetramer.

The catalysed reaction is (2E)-decenoyl-[ACP] = (3Z)-decenoyl-[ACP]. Its pathway is lipid metabolism; fatty acid biosynthesis. Functionally, catalyzes the isomerization of trans-2-decenoyl-ACP to cis-3-decenoyl-ACP. Required for survival at low pH. The chain is Trans-2-decenoyl-[acyl-carrier-protein] isomerase (fabM) from Streptococcus mutans serotype c (strain ATCC 700610 / UA159).